We begin with the raw amino-acid sequence, 662 residues long: Acetyl-coenzyme A synthetase (662 aa).

CoA-binding positions include 197–200 (RKGK) and Thr-317. ATP is bound by residues 393–395 (GEP), 417–422 (DTWWQT), Asp-510, and Arg-525. Residue Ser-533 coordinates CoA. Residue Arg-536 coordinates ATP. His-549 and Val-552 together coordinate Mg(2+). Lys-623 is subject to N6-acetyllysine.

It belongs to the ATP-dependent AMP-binding enzyme family. Requires Mg(2+) as cofactor. In terms of processing, acetylated. Deacetylation by the SIR2-homolog deacetylase activates the enzyme.

It catalyses the reaction acetate + ATP + CoA = acetyl-CoA + AMP + diphosphate. Functionally, catalyzes the conversion of acetate into acetyl-CoA (AcCoA), an essential intermediate at the junction of anabolic and catabolic pathways. AcsA undergoes a two-step reaction. In the first half reaction, AcsA combines acetate with ATP to form acetyl-adenylate (AcAMP) intermediate. In the second half reaction, it can then transfer the acetyl group from AcAMP to the sulfhydryl group of CoA, forming the product AcCoA. The sequence is that of Acetyl-coenzyme A synthetase from Helicobacter pylori (strain HPAG1).